A 102-amino-acid chain; its full sequence is Large ribosomal subunit protein uL24 (102 aa).

This sequence belongs to the universal ribosomal protein uL24 family. As to quaternary structure, part of the 50S ribosomal subunit.

In terms of biological role, one of two assembly initiator proteins, it binds directly to the 5'-end of the 23S rRNA, where it nucleates assembly of the 50S subunit. One of the proteins that surrounds the polypeptide exit tunnel on the outside of the subunit. The polypeptide is Large ribosomal subunit protein uL24 (Ralstonia nicotianae (strain ATCC BAA-1114 / GMI1000) (Ralstonia solanacearum)).